The following is a 76-amino-acid chain: Tautomerase PptA (76 aa).

The active-site Proton acceptor; via imino nitrogen is Pro-2.

Belongs to the 4-oxalocrotonate tautomerase family. PptA subfamily. As to quaternary structure, homodimer.

It localises to the cytoplasm. The sequence is that of Tautomerase PptA from Enterobacter sp. (strain 638).